The primary structure comprises 109 residues: MGMPNFGDMMKQIQQAGEKMQDVQKQLEKLVTSGEAGGGMVKVTVNGKQRVLSLWIDPEIMDDAEMVQDLVLAAVNSALEASGRMAQEEISKVAGGMINPQDILKNLGQ.

This sequence belongs to the YbaB/EbfC family. In terms of assembly, homodimer.

It is found in the cytoplasm. The protein localises to the nucleoid. Functionally, binds to DNA and alters its conformation. May be involved in regulation of gene expression, nucleoid organization and DNA protection. The protein is Nucleoid-associated protein Plut_1285 of Chlorobium luteolum (strain DSM 273 / BCRC 81028 / 2530) (Pelodictyon luteolum).